Consider the following 155-residue polypeptide: Ribosome maturation factor RimP (155 aa).

The protein belongs to the RimP family.

The protein resides in the cytoplasm. Functionally, required for maturation of 30S ribosomal subunits. The polypeptide is Ribosome maturation factor RimP (Synechococcus sp. (strain CC9605)).